A 277-amino-acid polypeptide reads, in one-letter code: WRKY transcription factor 68 (277 aa).

The tract at residues 51–96 is disordered; the sequence is TPLMHFPTTPNSSSSEAVNGDDEEEEDGEEQQHKTKKRFKFTKMSR. Residues 58–67 are compositionally biased toward polar residues; that stretch reads TTPNSSSSEA. Positions 69–79 are enriched in acidic residues; the sequence is NGDDEEEEDGE. The span at 84–96 shows a compositional bias: basic residues; that stretch reads KTKKRFKFTKMSR. The WRKY DNA-binding region spans 112–177; that stretch reads SEVLHLDDGY…YEGQHTHPRP (66 aa). The disordered stretch occupies residues 183–206; that stretch reads KEGSSPSNGSASRAHIGLPTLPPQ.

The protein belongs to the WRKY group II-c family.

The protein resides in the nucleus. In terms of biological role, transcription factor. Interacts specifically with the W box (5'-(T)TGAC[CT]-3'), a frequently occurring elicitor-responsive cis-acting element. The polypeptide is WRKY transcription factor 68 (WRKY68) (Arabidopsis thaliana (Mouse-ear cress)).